A 307-amino-acid polypeptide reads, in one-letter code: Zinc-alpha-2-glycoprotein (307 aa).

Residues 1 to 17 (MVPVLLSLPLLLGPAVF) form the signal peptide. Position 18 is a pyrrolidone carboxylic acid (Gln-18). An intrachain disulfide couples Cys-118 to Cys-181. Residues Asn-123, Asn-190, and Asn-254 are each glycosylated (N-linked (GlcNAc...) asparagine). Residues 202–287 (PTVTITSRVI…DHRGFSQSLS (86 aa)) enclose the Ig-like C1-type domain. A disulfide bridge connects residues Cys-220 and Cys-275.

This sequence belongs to the MHC class I family. As to quaternary structure, interacts with PIP.

Its subcellular location is the secreted. Stimulates lipid degradation in adipocytes and causes the extensive fat losses associated with some advanced cancers. The chain is Zinc-alpha-2-glycoprotein (Azgp1) from Mus musculus (Mouse).